An 845-amino-acid polypeptide reads, in one-letter code: P protein (845 aa).

The tract at residues 1 to 57 (MRLENREGRPTSGVLEMELPQASAPSRAGLGSLGLVGLDSSNHRPQQGGSKAGSRGP) is disordered. At 1–183 (MRLENREGRP…HLSKLRCCVQ (183 aa)) the chain is on the extracellular side. Residues 26–40 (SRAGLGSLGLVGLDS) show a composition bias toward low complexity. Residues 184–204 (WLKVSGLFVFVVLCSILFSLY) form a helical membrane-spanning segment. Topologically, residues 205–337 (PDQGKFWQLL…QYLRASIEAQ (133 aa)) are cytoplasmic. Residues 338–358 (VTIAAVILAGVYVLIIFEIVH) traverse the membrane as a helical segment. Topologically, residues 359–360 (RT) are extracellular. Residues 361–381 (LAAMLGSLAALAALAVIGDRP) traverse the membrane as a helical segment. At 382–393 (TLTQVVEWIDFE) the chain is on the cytoplasmic side. The chain crosses the membrane as a helical span at residues 394–414 (TLALLFGMMILVAIFSETGFF). Residues 415 to 429 (DYCAVKAYQLSRGRV) are Extracellular-facing. The chain crosses the membrane as a helical span at residues 430 to 450 (WAMIIMLCLIAAVLSAFLDNV). Residues 451-513 (TTALLFTPVT…ELRKMGLDFA (63 aa)) lie on the Cytoplasmic side of the membrane. The chain crosses the membrane as a helical span at residues 514–534 (GFTAHMFAGICFVLLFSFPLL). The Extracellular portion of the chain corresponds to 535-629 (RLLYWNRKLY…KKHRISDRTL (95 aa)). A helical transmembrane segment spans residues 630–650 (LTKCVTVLGLVIFMFFLNSFV). A topological domain (cytoplasmic) is located at residue P651. Residues 652-672 (GVHLDLGWIAILGAIWLLILA) traverse the membrane as a helical segment. Residues 673-687 (DIHDFEIILHRVEWA) lie on the Extracellular side of the membrane. Residues 688–708 (TLLFFAALFILMEALAHLHLI) form a helical membrane-spanning segment. Residues 709–730 (EYVGEQTALLIKMVPEDQRLAA) lie on the Cytoplasmic side of the membrane. The chain crosses the membrane as a helical span at residues 731–751 (AIIVVVWVSAIASSLIDNIPF). The Extracellular segment spans residues 752-773 (TATMIPVLLNLSRDPEISLPAP). Residues 774 to 794 (PLMYALALGACLGGNGTLIGA) form a helical membrane-spanning segment. Topologically, residues 795–820 (SANVVCAGIAEQHGYGFSFMEFFRLG) are cytoplasmic. The chain crosses the membrane as a helical span at residues 821–841 (FPMMVVSCMVGMCYLLVAHVV). Topologically, residues 842 to 845 (MGWN) are extracellular.

It belongs to the CitM (TC 2.A.11) transporter family.

It localises to the melanosome membrane. The catalysed reaction is chloride(in) = chloride(out). Functionally, contributes to a melanosome-specific anion (chloride) current that modulates melanosomal pH for optimal tyrosinase activity required for melanogenesis and the melanosome maturation. One of the components of the mammalian pigmentary system. May serve as a key control point at which ethnic skin color variation is determined. Major determinant of brown and/or blue eye color. Seems to regulate the post-translational processing of tyrosinase, which catalyzes the limiting reaction in melanin synthesis. The protein is P protein (Oca2) of Sus scrofa (Pig).